We begin with the raw amino-acid sequence, 238 residues long: Orotidine 5'-phosphate decarboxylase (238 aa).

Substrate-binding positions include Asp-10, Lys-32, 59 to 68 (DLKLHDIPNT), Thr-122, Arg-184, Gln-193, Gly-213, and Arg-214. Lys-61 serves as the catalytic Proton donor.

Belongs to the OMP decarboxylase family. Type 1 subfamily. Homodimer.

It carries out the reaction orotidine 5'-phosphate + H(+) = UMP + CO2. The protein operates within pyrimidine metabolism; UMP biosynthesis via de novo pathway; UMP from orotate: step 2/2. Catalyzes the decarboxylation of orotidine 5'-monophosphate (OMP) to uridine 5'-monophosphate (UMP). In Bacillus cereus (strain B4264), this protein is Orotidine 5'-phosphate decarboxylase.